The chain runs to 189 residues: Glycerol-3-phosphate acyltransferase (189 aa).

4 helical membrane-spanning segments follow: residues Met1–Leu21, Leu77–Phe97, Met111–Phe131, and Leu151–Val171.

It belongs to the PlsY family. As to quaternary structure, probably interacts with PlsX.

The protein localises to the cell inner membrane. The catalysed reaction is an acyl phosphate + sn-glycerol 3-phosphate = a 1-acyl-sn-glycero-3-phosphate + phosphate. It functions in the pathway lipid metabolism; phospholipid metabolism. Catalyzes the transfer of an acyl group from acyl-phosphate (acyl-PO(4)) to glycerol-3-phosphate (G3P) to form lysophosphatidic acid (LPA). This enzyme utilizes acyl-phosphate as fatty acyl donor, but not acyl-CoA or acyl-ACP. The chain is Glycerol-3-phosphate acyltransferase from Pseudomonas putida (strain W619).